Here is a 555-residue protein sequence, read N- to C-terminus: Esterase-5A (555 aa).

The signal sequence occupies residues 1 to 19; the sequence is MHLVRWLICLIQLWIQLGA. A disulfide bridge links cysteine 87 with cysteine 106. Residues asparagine 95 and asparagine 116 are each glycosylated (N-linked (GlcNAc...) asparagine). Serine 210 serves as the catalytic Acyl-ester intermediate. A disulfide bridge links cysteine 262 with cysteine 274. Residues asparagine 479 and asparagine 510 are each glycosylated (N-linked (GlcNAc...) asparagine). Cysteine 518 and cysteine 539 are joined by a disulfide.

It belongs to the type-B carboxylesterase/lipase family.

The protein localises to the secreted. It catalyses the reaction a carboxylic ester + H2O = an alcohol + a carboxylate + H(+). The chain is Esterase-5A (Est-5A) from Drosophila miranda (Fruit fly).